We begin with the raw amino-acid sequence, 464 residues long: Alpha-1,6-mannosyl-glycoprotein 4-beta-N-acetylglucosaminyltransferase (464 aa).

The Cytoplasmic portion of the chain corresponds to 1-10 (MRCSPKRSLT). Residues 11–31 (AVIAASFLLLLLLLLLHRGSW) form a helical; Signal-anchor for type II membrane protein membrane-spanning segment. Over 32–464 (QDPQEVQFRD…QSIGIWTAGT (433 aa)) the chain is Lumenal. Asparagine 70 and asparagine 201 each carry an N-linked (GlcNAc...) asparagine glycan.

This sequence belongs to the glycosyltransferase 54 family. Requires a divalent metal cation as cofactor. As to expression, highly expressed in oviduct, spleen, lung and colon.

Its subcellular location is the golgi apparatus membrane. The enzyme catalyses N(4)-{beta-D-GlcNAc-(1-&gt;2)-[beta-D-GlcNAc-(1-&gt;4)]-alpha-D-Man-(1-&gt;3)-[beta-D-GlcNAc-(1-&gt;2)-[beta-D-GlcNAc-(1-&gt;6)]-alpha-D-Man-(1-&gt;6)]-beta-D-Man-(1-&gt;4)-beta-D-GlcNAc-(1-&gt;4)-beta-D-GlcNAc}-L-asparaginyl-[protein] + UDP-N-acetyl-alpha-D-glucosamine = N(4)-{beta-D-GlcNAc-(1-&gt;2)-[beta-D-GlcNAc-(1-&gt;4)]-alpha-D-Man-(1-&gt;3)-[beta-D-GlcNAc-(1-&gt;2)-[beta-D-GlcNAc-(1-&gt;4)]-[beta-D-GlcNAc-(1-&gt;6)]-alpha-D-Man-(1-&gt;6)]-beta-D-Man-(1-&gt;4)-beta-D-GlcNAc-(1-&gt;4)-beta-D-GlcNAc}-L-asparaginyl-[protein] + UDP + H(+). Its pathway is protein modification; protein glycosylation. Its function is as follows. Glycosyltransferase that catalyzes the transfer of GlcNAc to the Manalpha1-6 arm to form GlcNAcBeta1-4Manalpha1-6 linkage (also named 'GnT-VI' activity). May also participate in the transfer of N-acetylglucosamine (GlcNAc) to the core mannose residues of N-linked glycans by catalyzing the formation of the GlcNAcbeta1-4 branch on the GlcNAcbeta1-2Manalpha1-3 arm of the core structure of N-linked glycans. The polypeptide is Alpha-1,6-mannosyl-glycoprotein 4-beta-N-acetylglucosaminyltransferase (MGAT4C) (Gallus gallus (Chicken)).